Reading from the N-terminus, the 270-residue chain is A-type potassium channel modulatory protein KCNIP2 (270 aa).

A compositionally biased stretch (basic and acidic residues) spans 1 to 17 (MRGQGRKESLSESRDLD). Positions 1–34 (MRGQGRKESLSESRDLDGSYDQLTGHPPGPSKKA) are disordered. Ser-9 bears the Phosphoserine mark. S-palmitoyl cysteine attachment occurs at residues Cys-45 and Cys-46. In terms of domain architecture, EF-hand 1; degenerate spans 81–137 (FELSTVCHRPEGLEQLQEQTKFTRRELQVLYRGFKNECPSGIVNEENFKQIYSQFFP). 3 consecutive EF-hand domains span residues 140–175 (DSSN…ILRG), 176–211 (TIDD…IYDM), and 224–259 (APRE…DENI). Positions 153, 155, 157, 159, 164, 189, 191, 193, 195, 200, 237, 239, 241, and 248 each coordinate Ca(2+). Residues 257–270 (ENIMRSMQLFDNVI) form an interaction with KCND2 region.

This sequence belongs to the recoverin family. As to quaternary structure, component of heteromultimeric potassium channels. Identified in potassium channel complexes containing KCND1, KCND2, KCND3, KCNIP1, KCNIP2, KCNIP3, KCNIP4, DPP6 and DPP10. The KCND2-KCNIP2 channel complex contains four KCND2 and four KCNIP2 subunits. Interacts with KCND2. Probably part of a complex consisting of KCNIP1, KCNIP2 isoform 3 and KCND2. At least isoform 2 and isoform 3 can self-associate to form homodimers and homotetramers. Isoform 3 interacts with KCNIP1 in a calcium-dependent manner. Interacts with KCND3; each KCNIP2 monomer interacts with two adjacent KCND3 subunits, through both the N-terminal inactivation ball of a KCND3 subunit and a C-terminal helix from the adjacent KCND3 subunit, clamping them together; this interaction modulates the channel gating kinetics. Post-translationally, palmitoylated. Palmitoylation enhances association with the plasma membrane. As to expression, expressed in heart, brain and lung. In brain, abundantly expressed in striatum, hippocampus and olfactory bulb, moderately expressed in cerebral cortex and lowly expressed in thalamus and hypothalamus. Isoform 1 is predominant in cerebral cortex, striatum and hippocampus. Isoform 1, isoform 2 and isoform 3 are equally expressed in olfactory bulb. Iisoform 3 is expressed at high levels and isoform 1 at low levels in heart (in PubMed:11263977).

Its subcellular location is the cell membrane. Functionally, regulatory subunit of Kv4/D (Shal)-type voltage-gated rapidly inactivating A-type potassium channels. Modulates channel density, inactivation kinetics and rate of recovery from inactivation in a calcium-dependent and isoform-specific manner. Involved in KCND2 and KCND3 trafficking to the cell surface. Essential for the expression of I(To) currents in the heart. Required for normal protein levels of KCND2 in the heart ventricle. This is A-type potassium channel modulatory protein KCNIP2 from Rattus norvegicus (Rat).